Reading from the N-terminus, the 487-residue chain is Acetyl-coenzyme A carboxylase carboxyl transferase subunit beta, chloroplastic (487 aa).

The interval 180–201 is disordered; it reads SRNSSENEGSSKRTRTKGSDLT. The region spanning 218–487 is the CoA carboxyltransferase N-terminal domain; sequence LWVQCENCYG…PLNQKSSKIK (270 aa). Zn(2+) is bound by residues Cys222, Cys225, Cys241, and Cys244. The C4-type zinc finger occupies 222 to 244; that stretch reads CENCYGLNYKKFLKSKMNICEQC.

This sequence belongs to the AccD/PCCB family. Acetyl-CoA carboxylase is a heterohexamer composed of biotin carboxyl carrier protein, biotin carboxylase and 2 subunits each of ACCase subunit alpha and ACCase plastid-coded subunit beta (accD). The cofactor is Zn(2+).

Its subcellular location is the plastid. It is found in the chloroplast stroma. The catalysed reaction is N(6)-carboxybiotinyl-L-lysyl-[protein] + acetyl-CoA = N(6)-biotinyl-L-lysyl-[protein] + malonyl-CoA. Its pathway is lipid metabolism; malonyl-CoA biosynthesis; malonyl-CoA from acetyl-CoA: step 1/1. Functionally, component of the acetyl coenzyme A carboxylase (ACC) complex. Biotin carboxylase (BC) catalyzes the carboxylation of biotin on its carrier protein (BCCP) and then the CO(2) group is transferred by the transcarboxylase to acetyl-CoA to form malonyl-CoA. The protein is Acetyl-coenzyme A carboxylase carboxyl transferase subunit beta, chloroplastic of Atropa belladonna (Belladonna).